The chain runs to 116 residues: MSLIMEAHSEHLCLRMIRLNADEMEEPLLHYMSYERLVNTYERYKSIGIVAEIAKRVFVETRILMTKVSTAQCMKPGREKRWKGSVRRRSLENFRLRGGIQWYSHACRGMAIGLQN.

Belongs to the UPF0329 family.

The sequence is that of UPF0329 protein ECU05_1650 from Encephalitozoon cuniculi (strain GB-M1) (Microsporidian parasite).